The sequence spans 801 residues: Transferrin receptor protein 2 (801 aa).

At 1–83 the chain is on the cytoplasmic side; that stretch reads MERLWGLFQR…WAAAGRRAAP (83 aa). The disordered stretch occupies residues 16–45; sequence PRSSQTVYQRVEGPRKGHLEEEEEDGEEGA. The Endocytosis signal signature appears at 23 to 26; it reads YQRV. Acidic residues predominate over residues 35-45; that stretch reads EEEEEDGEEGA. The chain crosses the membrane as a helical; Signal-anchor for type II membrane protein span at residues 84 to 104; that stretch reads YLVLTALLIFTGAFLLGYVAF. The Extracellular segment spans residues 105–801; sequence RGSCQACGDS…GDVWNIDNNF (697 aa). N-linked (GlcNAc...) asparagine glycosylation is found at Asn240, Asn339, Asn540, and Asn754.

Belongs to the peptidase M28 family. M28B subfamily. In terms of assembly, homodimer. In terms of tissue distribution, predominantly expressed in liver. While the alpha form is also expressed in spleen, lung, muscle, prostate and peripheral blood mononuclear cells, the beta form is expressed in all tissues tested, albeit weakly.

It is found in the cell membrane. The protein resides in the cytoplasm. Mediates cellular uptake of transferrin-bound iron in a non-iron dependent manner. May be involved in iron metabolism, hepatocyte function and erythrocyte differentiation. In Homo sapiens (Human), this protein is Transferrin receptor protein 2 (TFR2).